Reading from the N-terminus, the 37-residue chain is Calcitonin gene-related peptide 1 (37 aa).

The cysteines at positions 2 and 7 are disulfide-linked. Phenylalanine 37 carries the phenylalanine amide modification.

It belongs to the calcitonin family.

It is found in the secreted. Functionally, CGRP1/CALCA is a peptide hormone that induces vasodilation mediated by the CALCRL-RAMP1 receptor complex. Dilates a variety of vessels including the coronary, cerebral and systemic vasculature. Its abundance in the CNS also points toward a neurotransmitter or neuromodulator role. It also elevates platelet cAMP. CGRP1 can also bind and activate CALCR-RAMP1 (AMYR1) receptor complex. The polypeptide is Calcitonin gene-related peptide 1 (CALCA) (Ovis aries (Sheep)).